An 82-amino-acid chain; its full sequence is Ranatensin (82 aa).

Residues 1–27 (MTTIPAIGILPIDFLTILLLFSFISHS) form the signal peptide. The propeptide occupies 28-47 (VCVEFAEDAGELDKSNAFRR). At M58 the chain carries Methionine amide. A propeptide spanning residues 62–82 (SLSDDTEQATMYSSRFVESTS) is cleaved from the precursor.

It belongs to the bombesin/neuromedin-B/ranatensin family. As to expression, expressed by the skin glands.

It localises to the secreted. The sequence is that of Ranatensin from Lithobates pipiens (Northern leopard frog).